Here is a 246-residue protein sequence, read N- to C-terminus: Uridylate kinase (246 aa).

An ATP-binding site is contributed by 18–21 (KVSG). Residue G60 coordinates UMP. G61 and R65 together coordinate ATP. Residues D80 and 141-148 (TGNPFFTT) contribute to the UMP site. Residues T168, Q169, Y174, and D177 each contribute to the ATP site.

It belongs to the UMP kinase family. In terms of assembly, homohexamer.

It is found in the cytoplasm. It catalyses the reaction UMP + ATP = UDP + ADP. It functions in the pathway pyrimidine metabolism; CTP biosynthesis via de novo pathway; UDP from UMP (UMPK route): step 1/1. With respect to regulation, inhibited by UTP. In terms of biological role, catalyzes the reversible phosphorylation of UMP to UDP. The sequence is that of Uridylate kinase from Granulibacter bethesdensis (strain ATCC BAA-1260 / CGDNIH1).